A 329-amino-acid chain; its full sequence is tRNA-modifying protein YgfZ (329 aa).

Folate is bound by residues tryptophan 32 and tryptophan 190.

This sequence belongs to the tRNA-modifying YgfZ family.

Its subcellular location is the cytoplasm. Its function is as follows. Folate-binding protein involved in regulating the level of ATP-DnaA and in the modification of some tRNAs. It is probably a key factor in regulatory networks that act via tRNA modification, such as initiation of chromosomal replication. The chain is tRNA-modifying protein YgfZ from Photobacterium profundum (strain SS9).